Reading from the N-terminus, the 212-residue chain is Probable plastid-lipid-associated protein 11, chloroplastic (212 aa).

The N-terminal 25 residues, Met-1–Ser-25, are a transit peptide targeting the chloroplast.

Belongs to the PAP/fibrillin family.

It localises to the plastid. The protein resides in the chloroplast thylakoid. The chain is Probable plastid-lipid-associated protein 11, chloroplastic (PAP11) from Arabidopsis thaliana (Mouse-ear cress).